The sequence spans 135 residues: Aspartate 1-decarboxylase (135 aa).

Ser-25 serves as the catalytic Schiff-base intermediate with substrate; via pyruvic acid. Pyruvic acid (Ser) is present on Ser-25. Residue Thr-57 participates in substrate binding. The active-site Proton donor is Tyr-58. Position 73-75 (73-75) interacts with substrate; the sequence is GAA.

The protein belongs to the PanD family. As to quaternary structure, heterooctamer of four alpha and four beta subunits. Pyruvate is required as a cofactor. Post-translationally, is synthesized initially as an inactive proenzyme, which is activated by self-cleavage at a specific serine bond to produce a beta-subunit with a hydroxyl group at its C-terminus and an alpha-subunit with a pyruvoyl group at its N-terminus.

The protein resides in the cytoplasm. The catalysed reaction is L-aspartate + H(+) = beta-alanine + CO2. The protein operates within cofactor biosynthesis; (R)-pantothenate biosynthesis; beta-alanine from L-aspartate: step 1/1. Functionally, catalyzes the pyruvoyl-dependent decarboxylation of aspartate to produce beta-alanine. The protein is Aspartate 1-decarboxylase of Mycolicibacterium vanbaalenii (strain DSM 7251 / JCM 13017 / BCRC 16820 / KCTC 9966 / NRRL B-24157 / PYR-1) (Mycobacterium vanbaalenii).